The sequence spans 416 residues: MAAILLTTRPKVPVSFEDVSVYFTKTEWKLLDLRQKVLYKRVMLENYSHLVSLGFSFSKPHLISQLERGEGPWVADIPRTWATAGLHIGDRTQSKTSTSTQKHSGRQLPGADPQGGKEGQAARSSVLQRGAQGLGQSSAAGPQGPKGAEKRYLCQQCGKAFSRSSNLIKHRIIHSGEKPYACPECGKLFRRSFALLEHQRIHSGEKPYACPECSKTFTRSSNLIKHQVIHSGERPFACGDCGKLFRRSFALLEHARVHSGERPYACPECGKAFSRSSNLIEHQRTHRGEKPYACGQCAKAFKGVSQLIHHQRSHSGERPFACRECGKAFRGRSGLSQHRRVHSGEKPYECSDCGKAFGRRANLFKHQAVHGARRPAKAETARRLAGPGSTGPGSAVAATSPPRPSTAARPSRPSRR.

The KRAB domain occupies 14-85; that stretch reads VSFEDVSVYF…DIPRTWATAG (72 aa). Positions 86–125 are disordered; that stretch reads LHIGDRTQSKTSTSTQKHSGRQLPGADPQGGKEGQAARSS. 8 C2H2-type zinc fingers span residues 152-174, 180-202, 208-230, 236-258, 264-286, 292-314, 320-342, and 348-370; these read YLCQ…RIIH, YACP…QRIH, YACP…QVIH, FACG…ARVH, YACP…QRTH, YACG…QRSH, FACR…RRVH, and YECS…QAVH. A disordered region spans residues 368 to 416; that stretch reads AVHGARRPAKAETARRLAGPGSTGPGSAVAATSPPRPSTAARPSRPSRR. The span at 394–416 shows a compositional bias: low complexity; that stretch reads SAVAATSPPRPSTAARPSRPSRR.

Belongs to the krueppel C2H2-type zinc-finger protein family.

It is found in the nucleus. Its function is as follows. KRAB domain-containing zinc-finger protein that represses B1/Alu SINE transposable elements and modulates the transcription of nearby genes in a tissue-specific manner. It regulates glucose homeostasis and lipid metabolism by modulating the expression of the endocrine cell-defining transcription factor, MAFB, in pancreatic islets and, the fat metabolism regulator, ACACB, in adipose tissue and muscle. This is Zinc finger protein 92 homolog (ZFP92) from Homo sapiens (Human).